The chain runs to 707 residues: Polyribonucleotide nucleotidyltransferase (707 aa).

2 residues coordinate Mg(2+): Asp486 and Asp492. In terms of domain architecture, KH spans 553 to 612 (PRIHKIKINPEKIKDVIGKGGSVIRMLTEETGTIIEIEDDGTIKISATIGEKAKNAIRRI). The region spanning 622–690 (GRIYSGKVTR…RQGRLRLSIK (69 aa)) is the S1 motif domain.

This sequence belongs to the polyribonucleotide nucleotidyltransferase family. As to quaternary structure, component of the RNA degradosome, which is a multiprotein complex involved in RNA processing and mRNA degradation. Mg(2+) serves as cofactor.

Its subcellular location is the cytoplasm. The catalysed reaction is RNA(n+1) + phosphate = RNA(n) + a ribonucleoside 5'-diphosphate. Functionally, involved in mRNA degradation. Catalyzes the phosphorolysis of single-stranded polyribonucleotides processively in the 3'- to 5'-direction. This chain is Polyribonucleotide nucleotidyltransferase, found in Buchnera aphidicola subsp. Schizaphis graminum (strain Sg).